The primary structure comprises 126 residues: Protein VraC (126 aa).

In Staphylococcus haemolyticus (strain JCSC1435), this protein is Protein VraC.